The sequence spans 809 residues: Lon protease (809 aa).

Residues 20–216 (LPLLALRDVV…ELMNYLMNQS (197 aa)) form the Lon N-terminal domain. 369–376 (GPPGVGKT) is a binding site for ATP. The Lon proteolytic domain maps to 606 to 787 (EAQVGRVNGL…DEILPLALTS (182 aa)). Residues Ser-693 and Lys-736 contribute to the active site.

This sequence belongs to the peptidase S16 family. As to quaternary structure, homohexamer. Organized in a ring with a central cavity.

It is found in the cytoplasm. The catalysed reaction is Hydrolysis of proteins in presence of ATP.. ATP-dependent serine protease that mediates the selective degradation of mutant and abnormal proteins as well as certain short-lived regulatory proteins. Required for cellular homeostasis and for survival from DNA damage and developmental changes induced by stress. Degrades polypeptides processively to yield small peptide fragments that are 5 to 10 amino acids long. Binds to DNA in a double-stranded, site-specific manner. This is Lon protease from Acinetobacter baumannii (strain AB307-0294).